A 264-amino-acid polypeptide reads, in one-letter code: Proteasome assembly chaperone 2 (264 aa).

The residue at position 137 (Thr137) is a Phosphothreonine.

This sequence belongs to the PSMG2 family. Forms a heterodimer with PSMG1. The PSMG1-PSMG2 heterodimer interacts directly with the PSMA5 and PSMA7 proteasome alpha subunits. Post-translationally, degraded by the proteasome upon completion of 20S proteasome maturation. Widely expressed with highest levels in lung, brain and colon. Moderately expressed in muscle, stomach, spleen and heart. Weakly expressed in small intestine, pancreas and liver. Highly expressed in hepatocellular carcinomas with low levels in surrounding liver tissue.

It is found in the nucleus. Chaperone protein which promotes assembly of the 20S proteasome as part of a heterodimer with PSMG1. The PSMG1-PSMG2 heterodimer binds to the PSMA5 and PSMA7 proteasome subunits, promotes assembly of the proteasome alpha subunits into the heteroheptameric alpha ring and prevents alpha ring dimerization. In Homo sapiens (Human), this protein is Proteasome assembly chaperone 2.